The following is a 231-amino-acid chain: PX domain-containing protein 1 (231 aa).

One can recognise a PX domain in the interval 1–134; sequence MASAVFEGTS…TFFERSPLDQ (134 aa).

The chain is PX domain-containing protein 1 (PXDC1) from Homo sapiens (Human).